Consider the following 678-residue polypeptide: Dol-P-Man:Man(7)GlcNAc(2)-PP-Dol alpha-1,6-mannosyltransferase (678 aa).

The next 11 helical transmembrane spans lie at 1–21, 56–76, 81–101, 109–129, 133–153, 168–188, 200–220, 252–272, 279–299, 301–321, and 334–354; these read MDIL…FTKV, FIGP…FETL, FWAQ…AWNS, IYGV…FHFM, TRPL…AYWL, ILVF…VSLL, VALP…SFFW, FYSA…IGVA, PLVL…HKEL, FIIY…QRIW, and ALAC…LLVI.

This sequence belongs to the glycosyltransferase 22 family.

The protein localises to the endoplasmic reticulum membrane. It carries out the reaction an alpha-D-Man-(1-&gt;2)-alpha-D-Man-(1-&gt;2)-alpha-D-Man-(1-&gt;3)-[alpha-D-Man-(1-&gt;2)-alpha-D-Man-(1-&gt;3)-alpha-D-Man-(1-&gt;6)]-beta-D-Man-(1-&gt;4)-beta-D-GlcNAc-(1-&gt;4)-alpha-D-GlcNAc-diphospho-di-trans,poly-cis-dolichol + a di-trans,poly-cis-dolichyl beta-D-mannosyl phosphate = an alpha-D-Man-(1-&gt;2)-alpha-D-Man-(1-&gt;2)-alpha-D-Man-(1-&gt;3)-[alpha-D-Man-(1-&gt;2)-alpha-D-Man-(1-&gt;3)-[alpha-D-Man-(1-&gt;6)]-alpha-D-Man-(1-&gt;6)]-beta-D-Man-(1-&gt;4)-beta-D-GlcNAc-(1-&gt;4)-alpha-D-GlcNAc-diphospho-di-trans,poly-cis-dolichol + a di-trans,poly-cis-dolichyl phosphate + H(+). It participates in protein modification; protein glycosylation. Its function is as follows. Mannosyltransferase that operates in the biosynthetic pathway of dolichol-linked oligosaccharides, the glycan precursors employed in protein asparagine (N)-glycosylation. The assembly of dolichol-linked oligosaccharides begins on the cytosolic side of the endoplasmic reticulum membrane and finishes in its lumen. The sequential addition of sugars to dolichol pyrophosphate produces dolichol-linked oligosaccharides containing fourteen sugars, including two GlcNAcs, nine mannoses and three glucoses. Once assembled, the oligosaccharide is transferred from the lipid to nascent proteins by oligosaccharyltransferases. In the lumen of the endoplasmic reticulum, adds the eighth mannose residue in an alpha-1,6 linkage onto Man(7)GlcNAc(2)-PP-dolichol to produce Man(8)GlcNAc(2)-PP-dolichol. The polypeptide is Dol-P-Man:Man(7)GlcNAc(2)-PP-Dol alpha-1,6-mannosyltransferase (Drosophila melanogaster (Fruit fly)).